Here is a 478-residue protein sequence, read N- to C-terminus: Shikimate biosynthesis protein AroDE (478 aa).

The interval 1–208 is 3-dehydroquinate dehydratase; it reads MLCTIIRGPS…LNHHYFYNFT (208 aa). Residues serine 21, 29-31, and 55-57 contribute to the 3-dehydroquinate site; these read EMR and TWK. Histidine 110 acts as the Proton donor/acceptor; for 3-dehydroquinate dehydratase activity in catalysis. The active-site Schiff-base intermediate with substrate; for 3-dehydroquinate dehydratase activity is the lysine 133. Positions 171 and 196 each coordinate 3-dehydroquinate. A shikimate 5-dehydrogenase region spans residues 209-478; the sequence is NLSPQSQICA…VLASLFSIAA (270 aa). 226 to 228 is a binding site for shikimate; it reads SIG. The Proton acceptor; for shikimate dehydrogenase activity role is filled by lysine 277. Positions 298 and 313 each coordinate shikimate. NADP(+) contacts are provided by residues 337–341, 360–362, and glycine 435; these read GAGGA and NRT. Glutamine 442 contributes to the shikimate binding site.

In the N-terminal section; belongs to the type-I 3-dehydroquinase family. The protein in the C-terminal section; belongs to the shikimate dehydrogenase family.

The catalysed reaction is 3-dehydroquinate = 3-dehydroshikimate + H2O. The enzyme catalyses shikimate + NADP(+) = 3-dehydroshikimate + NADPH + H(+). It functions in the pathway metabolic intermediate biosynthesis; chorismate biosynthesis; chorismate from D-erythrose 4-phosphate and phosphoenolpyruvate: step 3/7. Its pathway is metabolic intermediate biosynthesis; chorismate biosynthesis; chorismate from D-erythrose 4-phosphate and phosphoenolpyruvate: step 4/7. Its function is as follows. Bifunctional enzyme that catalyzes two sequential steps of the aromatic amino acids biosynthetic pathway. In the first reaction, the AroD domain catalyzes the cis-dehydration of 3-dehydroquinate (DHQ) and introduces the first double bond of the aromatic ring to yield 3-dehydroshikimate; in the second reaction, the AroE domain catalyzes the reversible NADPH linked reduction of 3-dehydroshikimate (DHSA) to yield shikimate (SA). This Chlamydia muridarum (strain MoPn / Nigg) protein is Shikimate biosynthesis protein AroDE.